Here is a 290-residue protein sequence, read N- to C-terminus: ATP synthase gamma chain (290 aa).

The protein belongs to the ATPase gamma chain family. As to quaternary structure, F-type ATPases have 2 components, CF(1) - the catalytic core - and CF(0) - the membrane proton channel. CF(1) has five subunits: alpha(3), beta(3), gamma(1), delta(1), epsilon(1). CF(0) has three main subunits: a, b and c.

Its subcellular location is the cell inner membrane. Produces ATP from ADP in the presence of a proton gradient across the membrane. The gamma chain is believed to be important in regulating ATPase activity and the flow of protons through the CF(0) complex. The sequence is that of ATP synthase gamma chain from Gemmatimonas aurantiaca (strain DSM 14586 / JCM 11422 / NBRC 100505 / T-27).